A 569-amino-acid chain; its full sequence is MTSSAVPSLFRLSFLLFTLQVMNIGRIGAATRFYQFKVQTIRLTRLCQTNEIVTVNKKFPGPAISAQEDDRIVIKVINMTPYNTTIHWHGIKQKRSCWYDGPSYITQCPIQSGQSFTYNFKVAQQKGTFLWHAHFSWLRATVYGPLIVYPKASVPYPFKKPFNEHTILLGEYWLKNVVELEQHVLESGGPPPPADAFTINGQPGPNYNCSSKDVYEIQIVPRKIYLLRLINAGINMETFFTIANHRLTIVEVDGEYTKPYTTERVMLVPGQTMNILVTADQTVGRYSMAMGPYESAKNVKFQNTSAIANFQYIGALPNNVTVPAKLPIFNDNIAVKTVMDGLRSLNAVDVPRNIDAHLFITIGLNVNKCNSENPNNKCQGPRKGRLAASMNNISFIEPKVSILEAYYKQLEGYFTLDFPTTPEKAYDFVNGAPNDIANDTQAANGTRAIVFEYGSRIQIIFQNTGTLTTENHPIHLHGHSFYVIGYGTGNYDQQTAKFNLEDPPYLNTIGVPVGGWAAIRFVANNPGLWLLHCHFDIHQTWGMSTMFIVKNGKKVQESLPHPPADLPKC.

The first 29 residues, 1-29 (MTSSAVPSLFRLSFLLFTLQVMNIGRIGA), serve as a signal peptide directing secretion. 2 Plastocyanin-like domains span residues 37–153 (KVQT…PKAS) and 163–315 (NEHT…YIGA). An N-linked (GlcNAc...) asparagine glycan is attached at Asn-83. Residues His-87, His-89, His-132, and His-134 each coordinate Cu cation. Asn-208, Asn-303, Asn-319, Asn-392, Asn-438, and Asn-444 each carry an N-linked (GlcNAc...) asparagine glycan. One can recognise a Plastocyanin-like 3 domain in the interval 417-553 (DFPTTPEKAY…STMFIVKNGK (137 aa)). Residues His-472, His-475, His-477, His-532, Cys-533, His-534, His-538, and Met-543 each contribute to the Cu cation site.

This sequence belongs to the multicopper oxidase family. Cu cation serves as cofactor. As to expression, predominantly expressed in the inflorescence stem, but not in siliques.

The protein resides in the secreted. The protein localises to the extracellular space. Its subcellular location is the apoplast. The enzyme catalyses 4 hydroquinone + O2 = 4 benzosemiquinone + 2 H2O. Its function is as follows. Lignin degradation and detoxification of lignin-derived products. The polypeptide is Laccase-6 (LAC6) (Arabidopsis thaliana (Mouse-ear cress)).